A 262-amino-acid chain; its full sequence is Acyl-[acyl-carrier-protein]--UDP-N-acetylglucosamine O-acyltransferase (262 aa).

The protein belongs to the transferase hexapeptide repeat family. LpxA subfamily. Homotrimer.

Its subcellular location is the cytoplasm. The catalysed reaction is a (3R)-hydroxyacyl-[ACP] + UDP-N-acetyl-alpha-D-glucosamine = a UDP-3-O-[(3R)-3-hydroxyacyl]-N-acetyl-alpha-D-glucosamine + holo-[ACP]. Its pathway is glycolipid biosynthesis; lipid IV(A) biosynthesis; lipid IV(A) from (3R)-3-hydroxytetradecanoyl-[acyl-carrier-protein] and UDP-N-acetyl-alpha-D-glucosamine: step 1/6. Its function is as follows. Involved in the biosynthesis of lipid A, a phosphorylated glycolipid that anchors the lipopolysaccharide to the outer membrane of the cell. The sequence is that of Acyl-[acyl-carrier-protein]--UDP-N-acetylglucosamine O-acyltransferase from Shigella boydii serotype 18 (strain CDC 3083-94 / BS512).